The chain runs to 281 residues: sn-glycerol-3-phosphate transport system permease protein UgpE (281 aa).

6 consecutive transmembrane segments (helical) span residues 16–36, 85–105, 113–133, 142–162, 202–222, and 247–267; these read LILG…AATL, FSIT…IVWF, FFWM…FPTV, LDSY…TFLF, ALFV…LLII, and WNQV…IVLA. An ABC transmembrane type-1 domain is found at 77-268; the sequence is MLNSFIMAFS…IPPVVIVLAM (192 aa).

This sequence belongs to the binding-protein-dependent transport system permease family. UgpAE subfamily. As to quaternary structure, the complex is composed of two ATP-binding proteins (UgpC), two transmembrane proteins (UgpA and UgpE) and a solute-binding protein (UgpB).

It localises to the cell inner membrane. Functionally, part of the ABC transporter complex UgpBAEC involved in sn-glycerol-3-phosphate (G3P) import. Probably responsible for the translocation of the substrate across the membrane. This chain is sn-glycerol-3-phosphate transport system permease protein UgpE (ugpE), found in Salmonella choleraesuis (strain SC-B67).